The primary structure comprises 393 residues: Major outer membrane porin, serovar L1 (393 aa).

Positions 1-22 (MKKLLKSVLVFAALSSASSLQA) are cleaved as a signal peptide.

Belongs to the chlamydial porin (CP) (TC 1.B.2) family. In terms of assembly, part of a disulfide cross-linked outer membrane complex (COMC) composed of the major outer membrane porin (MOMP), the small cysteine-rich protein (OmcA) and the large cysteine-rich periplasmic protein (OmcB).

The protein resides in the cell outer membrane. In terms of biological role, in elementary bodies (EBs, the infectious stage, which is able to survive outside the host cell) provides the structural integrity of the outer envelope through disulfide cross-links with the small cysteine-rich protein and the large cysteine-rich periplasmic protein. It has been described in publications as the Sarkosyl-insoluble COMC (Chlamydia outer membrane complex), and serves as the functional equivalent of peptidoglycan. Functionally, permits diffusion of specific solutes through the outer membrane. The protein is Major outer membrane porin, serovar L1 (ompA) of Chlamydia trachomatis.